Reading from the N-terminus, the 303-residue chain is D-alanyl-D-alanine carboxypeptidase (303 aa).

Residues 7–23 traverse the membrane as a helical segment; sequence LLLLLFLIYLGYDYVNE. Residues 37–56 are disordered; that stretch reads DQNPKEHLENSGTSENTQEK. Substrate-binding positions include 154–156 and Ser161; that span reads YAL. Residues His163 and Asp170 each coordinate Zn(2+). The active-site Proton donor/acceptor is Glu213. Residue His216 participates in Zn(2+) binding.

It belongs to the peptidase M15B family. The cofactor is Zn(2+).

It is found in the cell membrane. Its activity is regulated as follows. The DD-carboxypeptidase activity is not inhibited by beta-lactam antibiotics. In terms of biological role, cleaves the C-terminal D-alanine residue of UDP-muramyl-pentapeptide (UDP-MurNAc-L-Ala-D-Glu-mDAP-D-Ala-D-Ala) or diacetyl-L-Lys-D-Ala-D-Ala. However the physiological substrate likely contains L-Lys instead of mDAP at the third position of the pentapeptide. Also releases the C-terminal D-lactate from UDP-MurNAc-L-Ala-D-Glu-mDAP-D-Ala-D-lactate, a depsipeptide produced by the vancomycin resistance protein VanA. Therefore, VanY should contribute in vivo to the hydrolysis of both the D-alanyl-D-alanine- and the depsipeptide-containing peptidoglycan precursors. Is not necessary for vancomycin resistance of E.faecium BM4147 and perhaps not W14-9. Does not display transpeptidase or beta-lactamase activities. This chain is D-alanyl-D-alanine carboxypeptidase, found in Enterococcus faecium (Streptococcus faecium).